We begin with the raw amino-acid sequence, 1051 residues long: Carbamoyl phosphate synthase large chain (1051 aa).

Positions 1–399 (MKETPKKVLV…SLQKAVRMLD (399 aa)) are carboxyphosphate synthetic domain. The ATP site is built by R127, R167, G173, G174, K206, L208, E213, G239, V240, H241, Q282, and E296. An ATP-grasp 1 domain is found at 131–325 (RETMIENNLP…LAYVSAKLAL (195 aa)). 3 residues coordinate Mg(2+): Q282, E296, and N298. 3 residues coordinate Mn(2+): Q282, E296, and N298. The tract at residues 400–548 (IGEPGVVGGK…LTYNGTEDDL (149 aa)) is oligomerization domain. A carbamoyl phosphate synthetic domain region spans residues 549–930 (EFSQGNKLLI…LKSWLSSIPN (382 aa)). Residues 673 to 863 (SKLLDKLGIS…LINEAMKAIF (191 aa)) enclose the ATP-grasp 2 domain. Residues R709, K748, I750, E755, G779, V780, H781, S782, Q822, and E834 each contribute to the ATP site. Residues Q822, E834, and N836 each contribute to the Mg(2+) site. Residues Q822, E834, and N836 each coordinate Mn(2+). The MGS-like domain maps to 930–1051 (NRIPNKNGIA…FEISEYGGGI (122 aa)). The allosteric domain stretch occupies residues 931 to 1051 (RIPNKNGIAL…FEISEYGGGI (121 aa)).

Belongs to the CarB family. In terms of assembly, composed of two chains; the small (or glutamine) chain promotes the hydrolysis of glutamine to ammonia, which is used by the large (or ammonia) chain to synthesize carbamoyl phosphate. Tetramer of heterodimers (alpha,beta)4. Mg(2+) serves as cofactor. The cofactor is Mn(2+).

The enzyme catalyses hydrogencarbonate + L-glutamine + 2 ATP + H2O = carbamoyl phosphate + L-glutamate + 2 ADP + phosphate + 2 H(+). The catalysed reaction is hydrogencarbonate + NH4(+) + 2 ATP = carbamoyl phosphate + 2 ADP + phosphate + 2 H(+). Its pathway is amino-acid biosynthesis; L-arginine biosynthesis; carbamoyl phosphate from bicarbonate: step 1/1. The protein operates within pyrimidine metabolism; UMP biosynthesis via de novo pathway; (S)-dihydroorotate from bicarbonate: step 1/3. Large subunit of the glutamine-dependent carbamoyl phosphate synthetase (CPSase). CPSase catalyzes the formation of carbamoyl phosphate from the ammonia moiety of glutamine, carbonate, and phosphate donated by ATP, constituting the first step of 2 biosynthetic pathways, one leading to arginine and/or urea and the other to pyrimidine nucleotides. The large subunit (synthetase) binds the substrates ammonia (free or transferred from glutamine from the small subunit), hydrogencarbonate and ATP and carries out an ATP-coupled ligase reaction, activating hydrogencarbonate by forming carboxy phosphate which reacts with ammonia to form carbamoyl phosphate. In Saccharolobus islandicus (strain L.S.2.15 / Lassen #1) (Sulfolobus islandicus), this protein is Carbamoyl phosphate synthase large chain.